The sequence spans 636 residues: 1-phosphatidylinositol 4,5-bisphosphate phosphodiesterase zeta-1 (636 aa).

Residues Cys35–Arg70 enclose the EF-hand domain. The region spanning Gln155–Lys299 is the PI-PLC X-box domain. Catalysis depends on residues His170 and His215. The disordered stretch occupies residues Lys311–Arg338. The stretch at Gln318–Ile345 forms a coiled coil. The span at Glu321–Glu336 shows a compositional bias: acidic residues. One can recognise a PI-PLC Y-box domain in the interval Leu375–Arg491. The 127-residue stretch at Arg491–Ser617 folds into the C2 domain.

As to quaternary structure, interacts via its C2 domain with PtdIns(3)P and, to a lesser extent, PtdIns(5)P in vitro. It depends on Ca(2+) as a cofactor. As to expression, expressed specifically in testis.

It is found in the nucleus. The protein localises to the cytoplasm. Its subcellular location is the perinuclear region. It catalyses the reaction a 1,2-diacyl-sn-glycero-3-phospho-(1D-myo-inositol-4,5-bisphosphate) + H2O = 1D-myo-inositol 1,4,5-trisphosphate + a 1,2-diacyl-sn-glycerol + H(+). In terms of biological role, the production of the second messenger molecules diacylglycerol (DAG) and inositol 1,4,5-trisphosphate (IP3) is mediated by activated phosphatidylinositol-specific phospholipase C enzymes. In vitro, hydrolyzes PtdIns(4,5)P2 in a Ca(2+)-dependent manner. Triggers intracellular Ca(2+) oscillations in oocytes solely during M phase and is involved in inducing oocyte activation and initiating embryonic development up to the blastocyst stage. Is therefore a strong candidate for the egg-activating soluble sperm factor that is transferred from the sperm into the egg cytoplasm following gamete membrane fusion. May exert an inhibitory effect on phospholipase-C-coupled processes that depend on calcium ions and protein kinase C, including CFTR trafficking and function. This chain is 1-phosphatidylinositol 4,5-bisphosphate phosphodiesterase zeta-1, found in Sus scrofa (Pig).